The following is a 318-amino-acid chain: Ethylene-responsive transcription factor FZP (318 aa).

Residues 1–15 (MNTRGSGSSSSSSSS) show a composition bias toward low complexity. Disordered regions lie at residues 1–59 (MNTR…GRFL) and 158–178 (SYGH…SGAS). Pro residues predominate over residues 25–37 (PPKPASQPSPPSS). The AP2/ERF DNA-binding region spans 57–114 (RFLGVRRRPWGRYAAEIRDPTTKERHWLGTFDTAQEAALAYDRAALSMKGAQARTNFV). Positions 160 to 171 (GHHHHHHHHHGH) are enriched in basic residues.

Belongs to the AP2/ERF transcription factor family. ERF subfamily.

It is found in the nucleus. Required to prevent the formation of axillary meristems within the spikelet meristem and permit the subsequent establishment of floral meristem identity. Mediates the transition from spikelet to floret meristem. Determines the transition from panicle branching to spikelet formation. May specify floral organ identity by regulating the class B genes (Agamous-like genes) MADS6 and MADS17, as well as class E genes MADS1, MADS7 and MADS8 in floral meristem. Possesses transactivation activity. The polypeptide is Ethylene-responsive transcription factor FZP (Oryza sativa subsp. japonica (Rice)).